We begin with the raw amino-acid sequence, 160 residues long: MSILKKPDLADPKLRAKLAKGMGHNYYGEPAWPNDLLYIFPVCILGTIACCIGLGVLEPTPLGEKADPFATPLEILPEWYFFPTFNLLRVIPNKLLGVLSMAAVPIGLITVPFIENVNKFQNPFRRPVASLVFLFGTFTAFWLGIGATMPITQALTLGFF.

A run of 3 helical transmembrane segments spans residues 36–56 (LLYI…GLGV), 95–115 (LLGV…PFIE), and 131–151 (LVFL…TMPI).

This sequence belongs to the cytochrome b family. PetD subfamily. In terms of assembly, the 4 large subunits of the cytochrome b6-f complex are cytochrome b6, subunit IV (17 kDa polypeptide, petD), cytochrome f and the Rieske protein, while the 4 small subunits are petG, petL, petM and petN. The complex functions as a dimer.

The protein resides in the plastid. The protein localises to the chloroplast thylakoid membrane. Component of the cytochrome b6-f complex, which mediates electron transfer between photosystem II (PSII) and photosystem I (PSI), cyclic electron flow around PSI, and state transitions. The protein is Cytochrome b6-f complex subunit 4 of Emiliania huxleyi (Coccolithophore).